The following is a 403-amino-acid chain: Exodeoxyribonuclease 7 large subunit (403 aa).

This sequence belongs to the XseA family. Heterooligomer composed of large and small subunits.

It localises to the cytoplasm. It carries out the reaction Exonucleolytic cleavage in either 5'- to 3'- or 3'- to 5'-direction to yield nucleoside 5'-phosphates.. Functionally, bidirectionally degrades single-stranded DNA into large acid-insoluble oligonucleotides, which are then degraded further into small acid-soluble oligonucleotides. The protein is Exodeoxyribonuclease 7 large subunit of Streptomyces griseus subsp. griseus (strain JCM 4626 / CBS 651.72 / NBRC 13350 / KCC S-0626 / ISP 5235).